Reading from the N-terminus, the 260-residue chain is Indole-3-glycerol phosphate synthase (260 aa).

The protein belongs to the TrpC family.

It catalyses the reaction 1-(2-carboxyphenylamino)-1-deoxy-D-ribulose 5-phosphate + H(+) = (1S,2R)-1-C-(indol-3-yl)glycerol 3-phosphate + CO2 + H2O. Its pathway is amino-acid biosynthesis; L-tryptophan biosynthesis; L-tryptophan from chorismate: step 4/5. The protein is Indole-3-glycerol phosphate synthase of Neisseria meningitidis serogroup C / serotype 2a (strain ATCC 700532 / DSM 15464 / FAM18).